The chain runs to 204 residues: Thymidylate kinase (204 aa).

13–20 (GIDGSGKS) contacts ATP.

This sequence belongs to the thymidylate kinase family.

The catalysed reaction is dTMP + ATP = dTDP + ADP. Its function is as follows. Phosphorylation of dTMP to form dTDP in both de novo and salvage pathways of dTTP synthesis. This Leptospira interrogans serogroup Icterohaemorrhagiae serovar copenhageni (strain Fiocruz L1-130) protein is Thymidylate kinase.